Here is a 222-residue protein sequence, read N- to C-terminus: Dihydrophenazinedicarboxylate synthase (222 aa).

Residue Ser-18 participates in substrate binding. FMN is bound by residues 73–76 (RIVV) and 88–89 (ST). His-90 contacts substrate. Residues 94-95 (QK) and Gln-117 each bind FMN. Substrate contacts are provided by Arg-139 and Ser-147. Residues 152-153 (QS) and Arg-205 contribute to the FMN site.

This sequence belongs to the pyridoxamine 5'-phosphate oxidase family. FMN serves as cofactor.

The catalysed reaction is (1R,6R)-1,4,5,5a,6,9-hexahydrophenazine-1,6-dicarboxylate + O2 = (1R,10aS)-1,4,10,10a-tetrahydrophenazine-1,6-dicarboxylate + H2O2. The enzyme catalyses (1R,10aS)-1,4,10,10a-tetrahydrophenazine-1,6-dicarboxylate + O2 = (5aS)-5,5a-dihydrophenazine-1,6-dicarboxylate + H2O2. It carries out the reaction (1R,10aS)-1,4,10,10a-tetrahydrophenazine-1-carboxylate + O2 = (10aS)-10,10a-dihydrophenazine-1-carboxylate + H2O2. It catalyses the reaction (1R)-1,4,5,10-tetrahydrophenazine-1-carboxylate + O2 = (10aS)-10,10a-dihydrophenazine-1-carboxylate + H2O2. It participates in antibiotic biosynthesis; phenazine biosynthesis. Functionally, involved in the biosynthesis of the antibiotic phenazine, a nitrogen-containing heterocyclic molecule having important roles in virulence, competition and biological control. Catalyzes several oxidations in the terminal steps of core phenazine biosynthesis. It oxidizes both hexahydrophenazine-1,6-dicarboxylic acid (HHPDC) and tetrahydrophenazine-1-carboxylic acid (THPCA) and thereby contributes to the generation of both phenazine-1,6-dicarboxylic acid (PDC) and phenazine-1-carboxylic acid (PCA). The sequence is that of Dihydrophenazinedicarboxylate synthase from Pseudomonas chlororaphis (Pseudomonas aureofaciens).